The following is a 157-amino-acid chain: Endoribonuclease YbeY (157 aa).

The Zn(2+) site is built by His114, His118, and His124.

This sequence belongs to the endoribonuclease YbeY family. Zn(2+) serves as cofactor.

The protein resides in the cytoplasm. Its function is as follows. Single strand-specific metallo-endoribonuclease involved in late-stage 70S ribosome quality control and in maturation of the 3' terminus of the 16S rRNA. In Yersinia enterocolitica serotype O:8 / biotype 1B (strain NCTC 13174 / 8081), this protein is Endoribonuclease YbeY.